Here is a 218-residue protein sequence, read N- to C-terminus: 3,4-dihydroxy-2-butanone 4-phosphate synthase (218 aa).

D-ribulose 5-phosphate is bound by residues 38–39 (RE), aspartate 43, 151–155 (RRGHT), and glutamate 175. Glutamate 39 contributes to the Mg(2+) binding site. Histidine 154 serves as a coordination point for Mg(2+).

The protein belongs to the DHBP synthase family. In terms of assembly, homodimer. Requires Mg(2+) as cofactor. Mn(2+) is required as a cofactor.

It catalyses the reaction D-ribulose 5-phosphate = (2S)-2-hydroxy-3-oxobutyl phosphate + formate + H(+). It functions in the pathway cofactor biosynthesis; riboflavin biosynthesis; 2-hydroxy-3-oxobutyl phosphate from D-ribulose 5-phosphate: step 1/1. In terms of biological role, catalyzes the conversion of D-ribulose 5-phosphate to formate and 3,4-dihydroxy-2-butanone 4-phosphate. This chain is 3,4-dihydroxy-2-butanone 4-phosphate synthase, found in Vibrio cholerae serotype O1 (strain M66-2).